We begin with the raw amino-acid sequence, 784 residues long: Probable aminopeptidase 1 (784 aa).

Substrate-binding positions include Glu-103 and 236 to 240; that span reads GAMEN. His-271 provides a ligand contact to Zn(2+). Residue Glu-272 is the Proton acceptor of the active site. Positions 275 and 294 each coordinate Zn(2+).

Belongs to the peptidase M1 family. Requires Zn(2+) as cofactor.

The protein localises to the cytoplasm. This chain is Probable aminopeptidase 1 (ape1), found in Saccharolobus solfataricus (strain ATCC 35092 / DSM 1617 / JCM 11322 / P2) (Sulfolobus solfataricus).